We begin with the raw amino-acid sequence, 561 residues long: Proline--tRNA ligase (561 aa).

Belongs to the class-II aminoacyl-tRNA synthetase family. ProS type 1 subfamily. Homodimer.

The protein resides in the cytoplasm. It catalyses the reaction tRNA(Pro) + L-proline + ATP = L-prolyl-tRNA(Pro) + AMP + diphosphate. Functionally, catalyzes the attachment of proline to tRNA(Pro) in a two-step reaction: proline is first activated by ATP to form Pro-AMP and then transferred to the acceptor end of tRNA(Pro). As ProRS can inadvertently accommodate and process non-cognate amino acids such as alanine and cysteine, to avoid such errors it has two additional distinct editing activities against alanine. One activity is designated as 'pretransfer' editing and involves the tRNA(Pro)-independent hydrolysis of activated Ala-AMP. The other activity is designated 'posttransfer' editing and involves deacylation of mischarged Ala-tRNA(Pro). The misacylated Cys-tRNA(Pro) is not edited by ProRS. The chain is Proline--tRNA ligase from Wigglesworthia glossinidia brevipalpis.